Consider the following 512-residue polypeptide: Ankyrin repeat domain-containing protein SOWAHC (512 aa).

Phosphoserine occurs at positions 82 and 125. Positions 126-248 (LGLGGEVSDQ…AEEESSVGAS (123 aa)) are disordered. Over residues 173–186 (PPQGEAEGGSSPSG) the composition is skewed to low complexity. Ser205 carries the phosphoserine modification. Gly residues predominate over residues 214-228 (PGDGNAGGRSRGGGD). Over residues 229–248 (SDTASLASSSAEEESSVGAS) the composition is skewed to low complexity. ANK repeat units follow at residues 288–317 (TGFT…KHQL) and 327–357 (GGYT…DVDI). Position 395 is an omega-N-methylarginine (Arg395). Residues 427–500 (HVPEGWTGGS…EERSLRGYSS (74 aa)) form a disordered region. The segment covering 453–462 (MKPRLNKIRF) has biased composition (basic residues). Acidic residues predominate over residues 481 to 492 (EEGEEEEEEEEE).

The protein belongs to the SOWAH family.

This Mus musculus (Mouse) protein is Ankyrin repeat domain-containing protein SOWAHC (Sowahc).